Here is a 388-residue protein sequence, read N- to C-terminus: Putative pyridoxal phosphate-dependent aminotransferase EpsN (388 aa).

Lys190 is subject to N6-(pyridoxal phosphate)lysine.

It belongs to the DegT/DnrJ/EryC1 family. It depends on pyridoxal 5'-phosphate as a cofactor.

Its function is as follows. May be involved in the production of the exopolysaccharide (EPS) component of the extracellular matrix during biofilm formation. EPS is responsible for the adhesion of chains of cells into bundles. In Bacillus subtilis (strain 168), this protein is Putative pyridoxal phosphate-dependent aminotransferase EpsN (epsN).